A 183-amino-acid polypeptide reads, in one-letter code: Probable chorismate pyruvate-lyase (183 aa).

Substrate is bound by residues Arg-79, Leu-115, and Glu-168.

Belongs to the UbiC family.

The protein localises to the cytoplasm. The enzyme catalyses chorismate = 4-hydroxybenzoate + pyruvate. It participates in cofactor biosynthesis; ubiquinone biosynthesis. Its function is as follows. Removes the pyruvyl group from chorismate, with concomitant aromatization of the ring, to provide 4-hydroxybenzoate (4HB) for the ubiquinone pathway. The polypeptide is Probable chorismate pyruvate-lyase (Chromohalobacter salexigens (strain ATCC BAA-138 / DSM 3043 / CIP 106854 / NCIMB 13768 / 1H11)).